Consider the following 392-residue polypeptide: Proteasome-activating nucleotidase (392 aa).

The stretch at 19–53 (IVRLLEEKIESLTKELEKLRQDLNWYKGELEKLLA) forms a coiled coil. Residues 178–183 (GTGKTL) and Y317 each bind ATP. Positions 390–392 (KYV) are docks into pockets in the proteasome alpha-ring to cause gate opening.

The protein belongs to the AAA ATPase family. Homohexamer. The hexameric complex has a two-ring architecture resembling a top hat that caps the 20S proteasome core at one or both ends. Upon ATP-binding, the C-terminus of PAN interacts with the alpha-rings of the proteasome core by binding to the intersubunit pockets.

The protein resides in the cytoplasm. In terms of biological role, ATPase which is responsible for recognizing, binding, unfolding and translocation of substrate proteins into the archaeal 20S proteasome core particle. Is essential for opening the gate of the 20S proteasome via an interaction with its C-terminus, thereby allowing substrate entry and access to the site of proteolysis. Thus, the C-termini of the proteasomal ATPase function like a 'key in a lock' to induce gate opening and therefore regulate proteolysis. Unfolding activity requires energy from ATP hydrolysis, whereas ATP binding alone promotes ATPase-20S proteasome association which triggers gate opening, and supports translocation of unfolded substrates. This is Proteasome-activating nucleotidase from Sulfurisphaera tokodaii (strain DSM 16993 / JCM 10545 / NBRC 100140 / 7) (Sulfolobus tokodaii).